The following is a 381-amino-acid chain: DnaJ-related protein spj1 (381 aa).

One can recognise a J domain in the interval 5–74 (NFSQKQILGV…RKIYDAYGEE (70 aa)). Residues 72–93 (GEEGLNGQPGGPGGGPGEGFPG) are disordered. The span at 78 to 93 (GQPGGPGGGPGEGFPG) shows a compositional bias: gly residues. The CR-type zinc-finger motif lies at 138–225 (GGSFTLEIPV…CKGERVAEVV (88 aa)). CXXCXGXG motif repeat units lie at residues 151-158 (CSVCSGQG), 172-179 (CPVCGGSG), 199-206 (CNACNGNG), and 213-220 (CPRCKGER). A Prevents secretion from ER motif is present at residues 378–381 (FDEL).

Its subcellular location is the endoplasmic reticulum. This is DnaJ-related protein spj1 (spj1) from Schizosaccharomyces pombe (strain 972 / ATCC 24843) (Fission yeast).